The chain runs to 495 residues: COP9 signalosome complex subunit 2 (495 aa).

The disordered stretch occupies residues 1 to 26; that stretch reads MGDEYMDDDEDYGFEYEDDSGSEPDV. In terms of domain architecture, PCI spans 254–416; that stretch reads AHTDFFEAFK…GMIEMPKNKK (163 aa). The disordered stretch occupies residues 426–468; that stretch reads PNAGDQGTTKSDSKPGTSSEPSTTTSVTSSILQGPPATSSCHQ. A compositionally biased stretch (polar residues) spans 430 to 441; the sequence is DQGTTKSDSKPG. The segment covering 442–455 has biased composition (low complexity); it reads TSSEPSTTTSVTSS.

Belongs to the CSN2 family. As to quaternary structure, component of the CSN complex, probably composed of csn-1, csn-2, csn-3, csn-4, csn-5, csn-6 and csn-7. Within the complex it probably interacts directly with csn-1, csn-3 and csn-4.

It localises to the cytoplasm. The protein resides in the nucleus. Essential component of the COP9 signalosome complex (CSN), a complex involved in various cellular and developmental processes. The CSN complex is an essential regulator of the ubiquitin (Ubl) conjugation pathway by mediating the deneddylation of the cullin subunits of the SCF-type E3 ligase complexes, leading to decrease the Ubl ligase activity of SCF. The CSN complex plays an essential role in embryogenesis and oogenesis and is required to regulate microtubule stability in the early embryo. Mediates mei-3/katanin targeting for degradation at the meiosis to mitosis transition via deneddylation of cul-3. The protein is COP9 signalosome complex subunit 2 (csn-2) of Caenorhabditis elegans.